The sequence spans 506 residues: UPF0522 protein A (506 aa).

The N-terminal stretch at 1–18 is a signal peptide; that stretch reads MIKSLLLLISIIIGIVIS. Asn-145, Asn-155, Asn-330, Asn-366, Asn-418, and Asn-427 each carry an N-linked (GlcNAc...) asparagine glycan.

It belongs to the UPF0522 family.

The protein resides in the secreted. This is UPF0522 protein A from Dictyostelium discoideum (Social amoeba).